The primary structure comprises 201 residues: MAEPGFFNAMLIGALIFGYVLGSIPFGLILTRLAGLGDVRAIGSGNIGATNVLRTGNKKLAAATLILDALKGTAAALIAAHFGQNAAIAAGFGAFIGHLFPVWIGFKGGKGVATYLGVLIGLAWAGALVFAAAWIVTALLTRYSSLSALVASLVVPIALYSRGNQALAALFAIMTVIVFIKHRANISRLLNGTESKIGAKG.

6 helical membrane passes run 10 to 30, 60 to 80, 86 to 106, 116 to 136, 139 to 159, and 166 to 186; these read MLIG…GLIL, LAAA…LIAA, AAIA…WIGF, LGVL…AWIV, LLTR…PIAL, and ALAA…RANI.

This sequence belongs to the PlsY family. In terms of assembly, probably interacts with PlsX.

It localises to the cell inner membrane. It carries out the reaction an acyl phosphate + sn-glycerol 3-phosphate = a 1-acyl-sn-glycero-3-phosphate + phosphate. The protein operates within lipid metabolism; phospholipid metabolism. Catalyzes the transfer of an acyl group from acyl-phosphate (acyl-PO(4)) to glycerol-3-phosphate (G3P) to form lysophosphatidic acid (LPA). This enzyme utilizes acyl-phosphate as fatty acyl donor, but not acyl-CoA or acyl-ACP. The chain is Glycerol-3-phosphate acyltransferase from Brucella ovis (strain ATCC 25840 / 63/290 / NCTC 10512).